A 558-amino-acid chain; its full sequence is Adenine deaminase (558 aa).

Belongs to the metallo-dependent hydrolases superfamily. Adenine deaminase family. Mn(2+) serves as cofactor.

The enzyme catalyses adenine + H2O + H(+) = hypoxanthine + NH4(+). In Deinococcus deserti (strain DSM 17065 / CIP 109153 / LMG 22923 / VCD115), this protein is Adenine deaminase.